Reading from the N-terminus, the 514-residue chain is Threonine synthase (514 aa).

An N6-(pyridoxal phosphate)lysine modification is found at Lys-117. The pyridoxal 5'-phosphate site is built by Gly-270, Asn-271, Phe-272, and Asp-274. A phosphoserine mark is found at Ser-319 and Ser-321. Thr-449 provides a ligand contact to pyridoxal 5'-phosphate.

It belongs to the threonine synthase family. Requires pyridoxal 5'-phosphate as cofactor.

The enzyme catalyses O-phospho-L-homoserine + H2O = L-threonine + phosphate. The protein operates within amino-acid biosynthesis; L-threonine biosynthesis; L-threonine from L-aspartate: step 5/5. Catalyzes the gamma-elimination of phosphate from L-phosphohomoserine and the beta-addition of water to produce L-threonine. This is Threonine synthase (thrc) from Schizosaccharomyces pombe (strain 972 / ATCC 24843) (Fission yeast).